The chain runs to 509 residues: Maturase K (509 aa).

This sequence belongs to the intron maturase 2 family. MatK subfamily.

The protein resides in the plastid. It localises to the chloroplast. Functionally, usually encoded in the trnK tRNA gene intron. Probably assists in splicing its own and other chloroplast group II introns. This is Maturase K from Nicotiana acuminata (Acuminate tobacco).